The chain runs to 76 residues: Probable small nuclear ribonucleoprotein G (76 aa).

One can recognise a Sm domain in the interval 4-76; that stretch reads AHPPEVKKYM…IVMVEALDRV (73 aa).

Belongs to the snRNP Sm proteins family. As to quaternary structure, interacts with the SMN complex. Core component of the spliceosomal U1, U2, U4 and U5 small nuclear ribonucleoproteins (snRNPs), the building blocks of the spliceosome. Most spliceosomal snRNPs contain a common set of Sm proteins, SNRPB, SNRPD1, SNRPD2, SNRPD3, SNRPE, SNRPF and SNRPG that assemble in a heptameric protein ring on the Sm site of the small nuclear RNA to form the core snRNP. Component of the U1 snRNP. Component of the U4/U6-U5 tri-snRNP complex. Component of the U7 snRNP complex. Component of the U11/U12 snRNPs that are part of the U12-type spliceosome.

Its subcellular location is the cytoplasm. The protein resides in the cytosol. It is found in the nucleus. Functionally, plays a role in pre-mRNA splicing as a core component of the spliceosomal U1, U2, U4 and U5 small nuclear ribonucleoproteins (snRNPs), the building blocks of the spliceosome. Component of both the pre-catalytic spliceosome B complex and activated spliceosome C complexes. Is also a component of the minor U12 spliceosome. The sequence is that of Probable small nuclear ribonucleoprotein G from Drosophila melanogaster (Fruit fly).